Reading from the N-terminus, the 48-residue chain is Delta-stichotoxin-Hcr1e (48 aa).

3 disulfides stabilise this stretch: Cys3–Cys43, Cys5–Cys33, and Cys26–Cys44.

Belongs to the sea anemone sodium channel inhibitory toxin family. Type II subfamily.

It localises to the secreted. The protein localises to the nematocyst. Its function is as follows. Binds to site 3 of voltage-gated sodium channels and inhibits the inactivation process. The sequence is that of Delta-stichotoxin-Hcr1e from Radianthus crispa (Leathery sea anemone).